The primary structure comprises 189 residues: Elongation factor P (189 aa).

This sequence belongs to the elongation factor P family.

Its subcellular location is the cytoplasm. It functions in the pathway protein biosynthesis; polypeptide chain elongation. In terms of biological role, involved in peptide bond synthesis. Stimulates efficient translation and peptide-bond synthesis on native or reconstituted 70S ribosomes in vitro. Probably functions indirectly by altering the affinity of the ribosome for aminoacyl-tRNA, thus increasing their reactivity as acceptors for peptidyl transferase. The polypeptide is Elongation factor P (Chloroflexus aurantiacus (strain ATCC 29364 / DSM 637 / Y-400-fl)).